The sequence spans 254 residues: Ribonuclease HII (254 aa).

Residues 70–254 enclose the RNase H type-2 domain; the sequence is QAIAGIDEVG…TFEPIKSMYE (185 aa). The a divalent metal cation site is built by aspartate 76, glutamate 77, and aspartate 168.

Belongs to the RNase HII family. The cofactor is Mn(2+). Requires Mg(2+) as cofactor.

It localises to the cytoplasm. It catalyses the reaction Endonucleolytic cleavage to 5'-phosphomonoester.. Its function is as follows. Endonuclease that specifically degrades the RNA of RNA-DNA hybrids. This Streptococcus sanguinis (strain SK36) protein is Ribonuclease HII.